A 424-amino-acid polypeptide reads, in one-letter code: L-glutamine:2-deoxy-scyllo-inosose aminotransferase (424 aa).

The residue at position 202 (lysine 202) is an N6-(pyridoxal phosphate)lysine.

The protein belongs to the DegT/DnrJ/EryC1 family. L-glutamine:2-deoxy-scyllo-inosose/scyllo-inosose aminotransferase subfamily. It depends on pyridoxal 5'-phosphate as a cofactor.

The catalysed reaction is 2-deoxy-L-scyllo-inosose + L-glutamine = 2-deoxy-scyllo-inosamine + 2-oxoglutaramate. It catalyses the reaction 3-amino-2,3-dideoxy-scyllo-inosose + L-glutamine = 2-deoxystreptamine + 2-oxoglutaramate. It functions in the pathway metabolic intermediate biosynthesis; 2-deoxystreptamine biosynthesis; 2-deoxystreptamine from D-glucose 6-phosphate: step 2/4. It participates in metabolic intermediate biosynthesis; 2-deoxystreptamine biosynthesis; 2-deoxystreptamine from D-glucose 6-phosphate: step 4/4. The protein operates within antibiotic biosynthesis; paromomycin biosynthesis. Functionally, catalyzes the PLP-dependent transamination of 2-deoxy-scyllo-inosose (2-DOI) to form 2-deoxy-scyllo-inosamine (2-DOIA) using L-glutamine as the amino donor. Also catalyzes the transamination of 3-amino-2,3-dideoxy-scyllo-inosose (keto-2-DOIA) into 2-deoxystreptamine (2-DOS). This Streptomyces paromomycinus (Streptomyces rimosus subsp. paromomycinus) protein is L-glutamine:2-deoxy-scyllo-inosose aminotransferase (parS).